We begin with the raw amino-acid sequence, 49 residues long: Turripeptide OL47 (49 aa).

The disordered stretch occupies residues 28–49; sequence RSDTEKKCTGGPDPCPPRQWPD. The segment covering 40–49 has biased composition (pro residues); it reads DPCPPRQWPD.

Post-translationally, contains 4 disulfide bonds. Expressed by the venom duct.

It localises to the secreted. In terms of biological role, acts as a neurotoxin by inhibiting an ion channel. This is Turripeptide OL47 from Iotyrris olangoensis (Sea snail).